The primary structure comprises 644 residues: Exoribonuclease 2 (644 aa).

The 328-residue stretch at 189–516 folds into the RNB domain; it reads REDLTALDFV…NHRLLKAVIK (328 aa). Residues 561–643 form the S1 motif domain; it reads DTRFAAEIVD…ETRSIIARPV (83 aa).

The protein belongs to the RNR ribonuclease family. RNase II subfamily.

It localises to the cytoplasm. The catalysed reaction is Exonucleolytic cleavage in the 3'- to 5'-direction to yield nucleoside 5'-phosphates.. In terms of biological role, involved in mRNA degradation. Hydrolyzes single-stranded polyribonucleotides processively in the 3' to 5' direction. In Shigella boydii serotype 18 (strain CDC 3083-94 / BS512), this protein is Exoribonuclease 2.